The sequence spans 309 residues: Ribonuclease Z (309 aa).

Zn(2+) is bound by residues H63, H65, D67, H68, H145, D216, and H274. D67 acts as the Proton acceptor in catalysis.

Belongs to the RNase Z family. Homodimer. It depends on Zn(2+) as a cofactor.

The catalysed reaction is Endonucleolytic cleavage of RNA, removing extra 3' nucleotides from tRNA precursor, generating 3' termini of tRNAs. A 3'-hydroxy group is left at the tRNA terminus and a 5'-phosphoryl group is left at the trailer molecule.. In terms of biological role, zinc phosphodiesterase, which displays some tRNA 3'-processing endonuclease activity. Probably involved in tRNA maturation, by removing a 3'-trailer from precursor tRNA. The chain is Ribonuclease Z from Streptococcus pneumoniae serotype 19F (strain G54).